The sequence spans 194 residues: Histone H1.0-A (194 aa).

Disordered stretches follow at residues 1–29 (MTEN…YSDM) and 96–194 (ADEV…GRKK). Positions 22-95 (DHPKYSDMIL…GASGSFRLAK (74 aa)) constitute an H15 domain. Basic residues-rich tracts occupy residues 102-164 (PAKK…KTVR) and 172-194 (KAKK…GRKK).

This sequence belongs to the histone H1/H5 family.

The protein resides in the nucleus. It is found in the chromosome. Functionally, histones H1 are necessary for the condensation of nucleosome chains into higher-order structures. The histones H1.0 are found in cells that are in terminal stages of differentiation or that have low rates of cell division. The chain is Histone H1.0-A (h1-0-a) from Xenopus laevis (African clawed frog).